A 74-amino-acid polypeptide reads, in one-letter code: Sec-independent protein translocase protein TatA (74 aa).

The helical transmembrane segment at 1 to 21 threads the bilayer; the sequence is MGGISIWQLLIIVAIIVLLFG. Positions 51-74 are disordered; the sequence is ANFDKVEAKESTSTTEKTKEKEQA.

It belongs to the TatA/E family. In terms of assembly, the Tat system comprises two distinct complexes: a TatABC complex, containing multiple copies of TatA, TatB and TatC subunits, and a separate TatA complex, containing only TatA subunits. Substrates initially bind to the TatABC complex, which probably triggers association of the separate TatA complex to form the active translocon.

Its subcellular location is the cell inner membrane. In terms of biological role, part of the twin-arginine translocation (Tat) system that transports large folded proteins containing a characteristic twin-arginine motif in their signal peptide across membranes. TatA could form the protein-conducting channel of the Tat system. The sequence is that of Sec-independent protein translocase protein TatA from Haemophilus ducreyi (strain 35000HP / ATCC 700724).